We begin with the raw amino-acid sequence, 415 residues long: Phosphoglycerate kinase (415 aa).

(2R)-3-phosphoglycerate is bound by residues valine 22, aspartate 23, phenylalanine 24, asparagine 25, glutamine 37, arginine 38, serine 61, histidine 62, glycine 64, leucine 120, arginine 121, histidine 168, and arginine 169. ADP is bound at residue glycine 212. Residue glycine 212 coordinates CDP. AMP-binding residues include alanine 213 and lysine 214. Residue alanine 213 participates in ATP binding. Position 213 (alanine 213) interacts with Mg(2+). Aspartate 217 provides a ligand contact to CDP. Mg(2+) is bound at residue aspartate 217. Position 218 (lysine 218) interacts with AMP. Lysine 218 provides a ligand contact to ATP. Position 236 (glycine 236) interacts with ADP. CDP is bound at residue glycine 236. Residues glycine 237 and glycine 311 each contribute to the AMP site. ATP is bound by residues glycine 237 and glycine 311. Positions 336 and 341 each coordinate CDP. ADP is bound at residue phenylalanine 341. Residue glutamate 342 participates in AMP binding. ATP-binding residues include glutamate 342, aspartate 373, and threonine 374. Residue aspartate 373 participates in Mg(2+) binding.

It belongs to the phosphoglycerate kinase family. In terms of assembly, monomer. It depends on Mg(2+) as a cofactor.

The protein localises to the cytoplasm. It carries out the reaction (2R)-3-phosphoglycerate + ATP = (2R)-3-phospho-glyceroyl phosphate + ADP. Its pathway is carbohydrate degradation; glycolysis; pyruvate from D-glyceraldehyde 3-phosphate: step 2/5. The polypeptide is Phosphoglycerate kinase (PGK) (Opisthorchis sinensis (Clonorchis sinensis)).